The following is a 79-amino-acid chain: Acyl carrier protein (79 aa).

The region spanning 2–77 (SSIEERVKKI…QAVDYINKHL (76 aa)) is the Carrier domain. The residue at position 37 (serine 37) is an O-(pantetheine 4'-phosphoryl)serine.

It belongs to the acyl carrier protein (ACP) family. In terms of processing, 4'-phosphopantetheine is transferred from CoA to a specific serine of apo-ACP by AcpS. This modification is essential for activity because fatty acids are bound in thioester linkage to the sulfhydryl of the prosthetic group.

Its subcellular location is the cytoplasm. The protein operates within lipid metabolism; fatty acid biosynthesis. Its function is as follows. Carrier of the growing fatty acid chain in fatty acid biosynthesis. This Alkalilimnicola ehrlichii (strain ATCC BAA-1101 / DSM 17681 / MLHE-1) protein is Acyl carrier protein.